Reading from the N-terminus, the 754-residue chain is MYTRFGPPIVFLISCYALILCGTVDALPRAPYFNDDINKTTTTSEDKTVGNTVVEEEKKTYTVGDSEGYQEASRLLQKSLNLSLDPCDDFFEYACRAWVDSHPIPDDLTSYSQFTATREKVLAEMRKLYEDNTSIPTSKSIALIKQIYNTCMDTEKHNAVGARDLLEKIKTYGYWPMVHNEKWRESTFDLTKLLSNTIQSRDVSVFFDFGPAEDSRNVSRRLLSFDQGSLGLGYSTRDYYLDEKKYEKQMKAYRKYTIGKVRYYTEDAGMAVNESKIESDVDEIIAFEKEWAQILVAEEDRRNYTKLYNVRRFDDLKEYMSIIDWKKLTLSTTPFLVHSYLKTNPSIIISDVEYLQKMNTLLQNTDPRIVTNYILLRWAGSWSQEIGKKYEDLQQEFAFQMYGRKQRQPRWKDCVSSAGGKLSYASGSMYVRKYFDANAKNTTLDMITDLQEAFRNMMHANDWMDAETKKYALEKADQMLKQIGYPDFILNDEKLDDWYKGLEGAPEDSFSQLVEKSIQWRNNFYYRRLLEPVNRFEFISSAAVVNAFYSPTRNAIAFPAGILQQPFFDARFPKALNYGGIGAVIGHEITHGFDDTGRQFDNVGNLRDWWDNTTSSKFNERTQCIIEQYADVKLRGTDLRINGKLTQGENIADNGGIKQAFKAYKSYLEKHGGQEARLPQFESLTNEQLFFVGYAQVWCGAKTPETKTLLLLTDPHSPETARVNTVLTNQPEFAEAFKCPAGSPMNPTKRCVVW.

A helical; Signal-anchor for type II membrane protein membrane pass occupies residues 5-27 (FGPPIVFLISCYALILCGTVDAL). N-linked (GlcNAc...) asparagine glycans are attached at residues Asn-38, Asn-81, Asn-132, Asn-217, Asn-273, Asn-303, and Asn-441. The region spanning 63-754 (VGDSEGYQEA…MNPTKRCVVW (692 aa)) is the Peptidase M13 domain. 4 disulfides stabilise this stretch: Cys-87–Cys-739, Cys-95–Cys-699, Cys-151–Cys-414, and Cys-624–Cys-751. His-587 is a binding site for Zn(2+). Glu-588 is a catalytic residue. His-591 is a Zn(2+) binding site. Asn-612 is a glycosylation site (N-linked (GlcNAc...) asparagine). Residue Glu-649 coordinates Zn(2+). The Proton donor role is filled by Asp-653.

The protein belongs to the peptidase M13 family. Zn(2+) serves as cofactor. Specifically expressed in pharyngeal cells and a single head neuron.

The protein localises to the membrane. Functionally, probable cell surface protease. Required to control the neuronal innervation of pharyngeal pumping. The polypeptide is Neprilysin-1 (nep-1) (Caenorhabditis elegans).